A 255-amino-acid polypeptide reads, in one-letter code: Indole-3-glycerol phosphate synthase (255 aa).

Belongs to the TrpC family.

It catalyses the reaction 1-(2-carboxyphenylamino)-1-deoxy-D-ribulose 5-phosphate + H(+) = (1S,2R)-1-C-(indol-3-yl)glycerol 3-phosphate + CO2 + H2O. The protein operates within amino-acid biosynthesis; L-tryptophan biosynthesis; L-tryptophan from chorismate: step 4/5. This is Indole-3-glycerol phosphate synthase from Streptococcus pneumoniae serotype 2 (strain D39 / NCTC 7466).